The primary structure comprises 614 residues: Putative ABC transporter ATP-binding protein MA_1747 (614 aa).

2 consecutive ABC transporter domains span residues 11–251 (VRLE…KLGI) and 319–552 (VLIE…AGLL). Residues 45-52 (GPSGCGKS) and 352-359 (GHNGAGKT) contribute to the ATP site.

It belongs to the ABC transporter superfamily.

It is found in the cell membrane. Functionally, probably part of an ABC transporter complex. Responsible for energy coupling to the transport system. The chain is Putative ABC transporter ATP-binding protein MA_1747 from Methanosarcina acetivorans (strain ATCC 35395 / DSM 2834 / JCM 12185 / C2A).